Consider the following 765-residue polypeptide: NADPH oxidase 5 (765 aa).

The interval 1-77 is N-terminal lobe of N-terminal regulatory EF domain; that stretch reads MNTSGDPAQT…LFDSDRSGTI (77 aa). Positions 1–161 are N-terminal regulatory EF domain; sequence MNTSGDPAQT…SCLRESAISL (161 aa). Residues 1–238 lie on the Cytoplasmic side of the membrane; sequence MNTSGDPAQT…RAYWHNHRSQ (238 aa). 2 EF-hand domains span residues 26–56 and 57–92; these read RWLR…ALHV and KESF…LIHG. 9 residues coordinate Ca(2+): Asp42, Glu44, Glu49, Asp70, Asp72, Ser74, Thr76, Glu81, and Asp106. A C-terminal lobe of N-terminal regulatory EF domain region spans residues 78–161; it reads TLQELQEALT…SCLRESAISL (84 aa). An EF-hand 3; atypical; contains an insert of 28 residues domain is found at 93–156; that stretch reads SPMDKLKFLF…RTVLQSCLRE (64 aa). Position 107 is an S-nitrosocysteine (Ile107). Ca(2+)-binding residues include Asp108, Ser138, Ser140, Glu145, Asp178, Asp180, Asn182, and Glu189. The segment at 122-141 is disordered; that stretch reads GAGAGPHWASSPLGTGSGSI. One can recognise an EF-hand 4 domain in the interval 165-200; the sequence is KLDQLTLALFESADADGNGAITFEELRDELQRFPGV. The chain crosses the membrane as a helical span at residues 239–259; the sequence is LFCLATYAGLHVLLFGLAASA. Position 246 is an S-nitrosocysteine (Ala246). Over 260–266 the chain is Extracellular; that stretch reads HRDLGAS. A helical membrane pass occupies residues 267–289; the sequence is VMVAKGCGQCLNFDCSFIAVLML. The Cytoplasmic segment spans residues 290 to 317; sequence RRCLTWLRATWLAQVLPLDQNIQFHQLM. Positions 293–440 constitute a Ferric oxidoreductase domain; the sequence is LTWLRATWLA…FLEKAIGLAV (148 aa). Residues 318 to 338 traverse the membrane as a helical segment; the sequence is GYVVVGLSLVHTVAHTVNFVL. Topologically, residues 339 to 362 are extracellular; the sequence is QAQAEASPFQFWELLLTTRPGIGW. Residues 363 to 383 traverse the membrane as a helical segment; sequence VHGSASPTGVALLLLLLLMFI. The Cytoplasmic segment spans residues 384–394; that stretch reads CSSSCIRRSGH. The chain crosses the membrane as a helical span at residues 395–417; the sequence is FEVFYWTHLSYLLVWLLLIFHGP. C-terminal catalytic dehydrogenase domain stretches follow at residues 398–719 and 416–737; these read FYWT…GRPD and GPNF…KVQV. Residues 418–434 are Extracellular-facing; the sequence is NFWKWLLVPGILFFLEK. The chain crosses the membrane as a helical span at residues 435–455; the sequence is AIGLAVSRMAAVCIMEVNLLP. One can recognise an FAD-binding FR-type domain in the interval 441–577; sequence SRMAAVCIME…DGPYGTPTRR (137 aa). Topologically, residues 456–583 are cytoplasmic; it reads SKVTHLLIKR…PTRRIFASEH (128 aa). Asp475 carries the post-translational modification Phosphoserine; by CaMK2. At His490 the chain carries Phosphothreonine; by PKC/PRKCA. Ile494 is subject to Phosphothreonine; by CaMK2 and PKC/PRKCA. Pro498 is subject to Phosphoserine; by CaMK2 and PKC/PRKCA. At Asp502 the chain carries Phosphoserine; by CaMK2. The residue at position 519 (Tyr519) is an S-nitrosocysteine. The helical transmembrane segment at 584–604 threads the bilayer; the sequence is AVLIGAGIGITPFASILQSIM. The Extracellular portion of the chain corresponds to 605-765; sequence YRHQKRKHTC…FGFRFFQENF (161 aa). At Asp659 the chain carries Phosphoserine; by CaMK2. Leu694 carries the post-translational modification S-nitrosocysteine.

As to quaternary structure, homooligomer. Requires FAD as cofactor. Mg(2+) is required as a cofactor. Post-translationally, phosphorylation at Ser-475 by CaMK2 and at Ser-490, Thr-494 and Ser-498 by PKC/PRKCA positively regulates its catalytic activity. In terms of processing, S-nitrosylation in response to nitric oxide inhibits its catalytic activity. Mainly expressed in pachytene spermatocytes of testis and in lymphocyte-rich areas of spleen and lymph nodes. Also detected in ovary, placenta, pancreas, cardiac fibroblasts. Expressed in B-cells and prostate malignant cells. As to expression, expressed in spleen. Expressed in endothelial cells, pulmonary artery smooth muscle cells and epithelial colorectal adenocarcinoma cells. In terms of tissue distribution, expressed in microvascular endothelial cells (at protein level). Expressed in testis. Expressed in endothelial cells and pulmonary artery smooth muscle cells. Expressed in pulmonary artery smooth muscle cells and epithelial colorectal adenocarcinoma cells. As to expression, expressed in endothelial cells and pulmonary artery smooth muscle cells. In terms of tissue distribution, expressed in microvascular endothelial cells (at protein level).

Its subcellular location is the endoplasmic reticulum. The protein localises to the cell membrane. The catalysed reaction is NADPH + 2 O2 = 2 superoxide + NADP(+) + H(+). Its activity is regulated as follows. Activated by calcium which induces conformational changes and interaction between the N-terminal regulatory region and the C-terminal catalytic region. Inhibited by diphenylene iodonium. Functionally, calcium-dependent NADPH oxidase that catalyzes the generation of superoxide from molecular oxygen utilizing NADPH as an electron donor. May play a role in cell growth and apoptosis. Its function is as follows. Calcium-dependent NADPH oxidase that catalyzes the generation of superoxide from molecular oxygen utilizing NADPH as an electron donor. Involved in endothelial generation of reactive oxygen species (ROS), proliferation and angiogenesis and contributes to endothelial response to thrombin. Regulates redox-dependent processes in lymphocytes and spermatozoa. In terms of biological role, calcium-dependent NADPH oxidase that catalyzes the generation of superoxide from molecular oxygen utilizing NADPH as an electron donor. This isoform lacks calcium-binding domains and was showed to present a NADPH oxidase activity in a calcium-independent manner. May be involved in endothelial generation of reactive oxygen species (ROS), proliferation and angiogenesis and contribute to endothelial response to thrombin. However another study showed an absence of oxidase activity. Subject to rapid degradation. Functionally, lacks calcium-dependent NADPH oxidase activity. The chain is NADPH oxidase 5 from Homo sapiens (Human).